We begin with the raw amino-acid sequence, 451 residues long: Phosphoglucosamine mutase (451 aa).

Catalysis depends on serine 107, which acts as the Phosphoserine intermediate. Mg(2+)-binding residues include serine 107, aspartate 246, aspartate 248, and aspartate 250. Residue serine 107 is modified to Phosphoserine.

This sequence belongs to the phosphohexose mutase family. It depends on Mg(2+) as a cofactor. Activated by phosphorylation.

The catalysed reaction is alpha-D-glucosamine 1-phosphate = D-glucosamine 6-phosphate. In terms of biological role, catalyzes the conversion of glucosamine-6-phosphate to glucosamine-1-phosphate. The polypeptide is Phosphoglucosamine mutase (Burkholderia multivorans (strain ATCC 17616 / 249)).